The sequence spans 127 residues: Small ribosomal subunit protein eS8 (127 aa).

Residues 1 to 31 (MTIFQGKSGKKATGGSLKQSRKKRRFELGRE) form a disordered region.

The protein belongs to the eukaryotic ribosomal protein eS8 family. Part of the 30S ribosomal subunit.

In Thermoplasma acidophilum (strain ATCC 25905 / DSM 1728 / JCM 9062 / NBRC 15155 / AMRC-C165), this protein is Small ribosomal subunit protein eS8 (rps8e).